The sequence spans 138 residues: Small ribosomal subunit protein uS11c (138 aa).

The disordered stretch occupies residues 1 to 24 (MAKPIPKVGSRRNGRSSARKSARR). Positions 9–24 (GSRRNGRSSARKSARR) are enriched in basic residues.

The protein belongs to the universal ribosomal protein uS11 family. In terms of assembly, part of the 30S ribosomal subunit.

The protein resides in the plastid. Its subcellular location is the chloroplast. In Gossypium hirsutum (Upland cotton), this protein is Small ribosomal subunit protein uS11c.